A 215-amino-acid polypeptide reads, in one-letter code: UPF0502 protein Gbem_0102 (215 aa).

Belongs to the UPF0502 family.

In Citrifermentans bemidjiense (strain ATCC BAA-1014 / DSM 16622 / JCM 12645 / Bem) (Geobacter bemidjiensis), this protein is UPF0502 protein Gbem_0102.